Here is a 214-residue protein sequence, read N- to C-terminus: MDQKFYISSLLQEDTPSKEKPETSSESPIPTGSECSLNESSDTTLDQKMEPNKKMFNGTLDFNPWICHVSQQLAAQLSQNGKNRPGAPNQVPLLNMNVNQTMGNMWDPRLSWLYPYMSKSPQKRKGGQIRFTNEQTDALEHKFDSHKYLSPQERKKLAKSLSLSERQVKTWFQNRRAKWRRVRKDGEDEDEMPNGASARSLGQLQSSNPFLSHG.

2 disordered regions span residues 1–50 (MDQK…QKME) and 180–214 (RRVR…LSHG). The span at 24 to 34 (SSESPIPTGSE) shows a compositional bias: low complexity. Over residues 35 to 44 (CSLNESSDTT) the composition is skewed to polar residues. Residues 124–183 (RKGGQIRFTNEQTDALEHKFDSHKYLSPQERKKLAKSLSLSERQVKTWFQNRRAKWRRVR) constitute a DNA-binding region (homeobox). Over residues 200-214 (SLGQLQSSNPFLSHG) the composition is skewed to polar residues.

The protein resides in the nucleus. In terms of biological role, transcriptional repressor. Involved in pharyngeal development and required for the formation of the pharyngeal isthmus. Plays a role in modulating cytoskeleton in the muscle cells of the isthmus. Regulates expression of the acetylcholinesterase genes ace-1 and ace-2. May regulate its own expression. In Caenorhabditis elegans, this protein is Homeobox protein HEX homolog pha-2.